The sequence spans 117 residues: G antigen 12B/C/D/E (117 aa).

The disordered stretch occupies residues 1–117 (MSWRGRSTYY…PEEGEKQSQC (117 aa)). Composition is skewed to acidic residues over residues 32–45 (FSDE…EEGE) and 87–96 (ECEDGPDGQE). A compositionally biased stretch (basic and acidic residues) spans 103-117 (EEVKTPEEGEKQSQC).

This sequence belongs to the GAGE family.

The chain is G antigen 12B/C/D/E (GAGE12B) from Homo sapiens (Human).